A 504-amino-acid polypeptide reads, in one-letter code: UDP-N-acetylglucosamine--peptide N-acetylglucosaminyltransferase GtfA subunit (504 aa).

16-19 is a binding site for UDP; that stretch reads GVEY. His-243 is an N-acetyl-D-glucosamine binding site. 385–386 is a binding site for UDP; that stretch reads HK. 405-408 contributes to the N-acetyl-D-glucosamine binding site; sequence EGFG.

Belongs to the glycosyltransferase group 1 family. Glycosyltransferase 4 subfamily. Interacts with stabilizing protein GtfB (Gtf1), probably via the N-terminus of this protein; probably forms a heterotetramer with 2 subunits each of GtfA and GtfB. Part of the accessory SecA2/SecY2 protein translocation apparatus.

The protein resides in the cytoplasm. Its subcellular location is the cell membrane. It catalyses the reaction L-seryl-[protein] + UDP-N-acetyl-alpha-D-glucosamine = 3-O-[N-acetyl-alpha-D-glucosaminyl]-L-seryl-[protein] + UDP + H(+). Its pathway is protein modification; protein glycosylation. Required for polymorphic O-glycosylation of serine-rich repeat protein Fap1. Catalyzes the first step in glycosylation by transferring N-acetylglucosamine from UDP-GlcNAc to serine residues in Fap1. Part of the accessory SecA2/SecY2 system specifically required to export Fap1, a serine-rich fimbrial adhesin encoded upstream in the same operon. The GtfA-GtfB (Gtf1-Gtf2 in this bacteria) complex adds GlcNAc from UDP-GlcNAc to Fap1, attaching the first sugar residue. Cannot use not UDP-Glc as substrate. This subunit has very low glycosyltransferase activity; the GtfB stabilizing protein enhances membrane association, protease resistance and glycosyltransferase activity. This chain is UDP-N-acetylglucosamine--peptide N-acetylglucosaminyltransferase GtfA subunit, found in Streptococcus parasanguinis.